Reading from the N-terminus, the 443-residue chain is Xaa-Pro dipeptidase (443 aa).

Mn(2+)-binding residues include Asp-246, Asp-257, His-339, Glu-384, and Glu-423.

This sequence belongs to the peptidase M24B family. Bacterial-type prolidase subfamily. Requires Mn(2+) as cofactor.

It carries out the reaction Xaa-L-Pro dipeptide + H2O = an L-alpha-amino acid + L-proline. Functionally, splits dipeptides with a prolyl residue in the C-terminal position. In Escherichia coli (strain 55989 / EAEC), this protein is Xaa-Pro dipeptidase.